The following is a 290-amino-acid chain: uncharacterized protein (290 aa).

Positions 30-274 (PTILLLHGFP…YDTGHFALET (245 aa)) constitute an AB hydrolase-1 domain. The active site involves His-269.

The protein belongs to the DmpD/TodF/XylF esterase family.

This is an uncharacterized protein from Saccharomyces cerevisiae (strain ATCC 204508 / S288c) (Baker's yeast).